The following is a 222-amino-acid chain: Cytidylate kinase (222 aa).

10-18 (GPAGSGKSS) is a binding site for ATP.

The protein belongs to the cytidylate kinase family. Type 1 subfamily.

Its subcellular location is the cytoplasm. It carries out the reaction CMP + ATP = CDP + ADP. The catalysed reaction is dCMP + ATP = dCDP + ADP. The protein is Cytidylate kinase of Acholeplasma laidlawii (strain PG-8A).